The following is a 615-amino-acid chain: DNA mismatch repair protein MutL (615 aa).

A disordered region spans residues 362-397 (HFAEPAVREPVAPRYTPAPASGSRPAAPWPNAQPGY). Residues 378 to 391 (PAPASGSRPAAPWP) show a composition bias toward low complexity.

The protein belongs to the DNA mismatch repair MutL/HexB family.

This protein is involved in the repair of mismatches in DNA. It is required for dam-dependent methyl-directed DNA mismatch repair. May act as a 'molecular matchmaker', a protein that promotes the formation of a stable complex between two or more DNA-binding proteins in an ATP-dependent manner without itself being part of a final effector complex. The protein is DNA mismatch repair protein MutL of Escherichia coli O17:K52:H18 (strain UMN026 / ExPEC).